Here is a 102-residue protein sequence, read N- to C-terminus: MAGQKIRIRLKSYDHEVIDQSAKKIVETVTNAGATVVGPVPLPTEKNVFCVIRSPHMYKDSREHFEMRTHKRLIDIVDPTPKAVDSLMHIDLPADVNIEIKL.

The protein belongs to the universal ribosomal protein uS10 family. In terms of assembly, part of the 30S ribosomal subunit.

Its function is as follows. Involved in the binding of tRNA to the ribosomes. The chain is Small ribosomal subunit protein uS10 from Bifidobacterium longum subsp. infantis (strain ATCC 15697 / DSM 20088 / JCM 1222 / NCTC 11817 / S12).